Here is a 121-residue protein sequence, read N- to C-terminus: Fluoride-specific ion channel FluC 1 (121 aa).

4 consecutive transmembrane segments (helical) span residues 3–23 (YVYI…ISFL), 35–55 (VANL…IAFF), 64–84 (AITT…LELI), and 92–112 (FITL…LCYV). 2 residues coordinate Na(+): glycine 71 and threonine 74.

Belongs to the fluoride channel Fluc/FEX (TC 1.A.43) family.

The protein localises to the cell membrane. It carries out the reaction fluoride(in) = fluoride(out). Its activity is regulated as follows. Na(+) is not transported, but it plays an essential structural role and its presence is essential for fluoride channel function. In terms of biological role, fluoride-specific ion channel. Important for reducing fluoride concentration in the cell, thus reducing its toxicity. The polypeptide is Fluoride-specific ion channel FluC 1 (Staphylococcus aureus (strain bovine RF122 / ET3-1)).